Here is a 41-residue protein sequence, read N- to C-terminus: Large ribosomal subunit protein bL36 (41 aa).

It belongs to the bacterial ribosomal protein bL36 family.

This is Large ribosomal subunit protein bL36 from Caulobacter vibrioides (strain ATCC 19089 / CIP 103742 / CB 15) (Caulobacter crescentus).